A 196-amino-acid polypeptide reads, in one-letter code: ATP-dependent Clp protease proteolytic subunit (196 aa).

S101 (nucleophile) is an active-site residue. The active site involves H126.

The protein belongs to the peptidase S14 family. In terms of assembly, component of the chloroplastic Clp protease core complex.

It localises to the plastid. Its subcellular location is the chloroplast stroma. The catalysed reaction is Hydrolysis of proteins to small peptides in the presence of ATP and magnesium. alpha-casein is the usual test substrate. In the absence of ATP, only oligopeptides shorter than five residues are hydrolyzed (such as succinyl-Leu-Tyr-|-NHMec, and Leu-Tyr-Leu-|-Tyr-Trp, in which cleavage of the -Tyr-|-Leu- and -Tyr-|-Trp bonds also occurs).. Its function is as follows. Cleaves peptides in various proteins in a process that requires ATP hydrolysis. Has a chymotrypsin-like activity. Plays a major role in the degradation of misfolded proteins. This Eucalyptus globulus subsp. globulus (Tasmanian blue gum) protein is ATP-dependent Clp protease proteolytic subunit.